The primary structure comprises 597 residues: Lipoprotein LpqB (597 aa).

The first 28 residues, 1-28 (MTPGSRSAMRSRSVCGAIALAVLVTVSG), serve as a signal peptide directing secretion. Residue cysteine 29 is the site of N-palmitoyl cysteine attachment. Cysteine 29 is lipidated: S-diacylglycerol cysteine. Over residues 39–51 (QAIGTINRDSPGS) the composition is skewed to polar residues. The disordered stretch occupies residues 39 to 59 (QAIGTINRDSPGSSVAAPAPG).

This sequence belongs to the LpqB lipoprotein family.

It is found in the cell membrane. The polypeptide is Lipoprotein LpqB (Rhodococcus opacus (strain B4)).